A 190-amino-acid polypeptide reads, in one-letter code: Glutathione peroxidase 2 (190 aa).

Selenocysteine 40 is a catalytic residue. Selenocysteine 40 is a non-standard amino acid (selenocysteine).

It belongs to the glutathione peroxidase family. As to quaternary structure, homotetramer. As to expression, exclusively expressed in the stomach and small intestine.

Its subcellular location is the cytoplasm. The protein resides in the cytosol. The enzyme catalyses 2 glutathione + H2O2 = glutathione disulfide + 2 H2O. It carries out the reaction a hydroperoxy polyunsaturated fatty acid + 2 glutathione = a hydroxy polyunsaturated fatty acid + glutathione disulfide + H2O. It catalyses the reaction tert-butyl hydroperoxide + 2 glutathione = tert-butanol + glutathione disulfide + H2O. The catalysed reaction is cumene hydroperoxide + 2 glutathione = 2-phenylpropan-2-ol + glutathione disulfide + H2O. The enzyme catalyses (13S)-hydroperoxy-(9Z,11E)-octadecadienoate + 2 glutathione = (13S)-hydroxy-(9Z,11E)-octadecadienoate + glutathione disulfide + H2O. It carries out the reaction (5S)-hydroperoxy-(6E,8Z,11Z,14Z)-eicosatetraenoate + 2 glutathione = (5S)-hydroxy-(6E,8Z,11Z,14Z)-eicosatetraenoate + glutathione disulfide + H2O. It catalyses the reaction (12R)-hydroperoxy-(5Z,8Z,10E,14Z)-eicosatetraenoate + 2 glutathione = (12R)-hydroxy-(5Z,8Z,10E,14Z)-eicosatetraenoate + glutathione disulfide + H2O. The catalysed reaction is (15S)-hydroperoxy-(5Z,8Z,11Z,13E)-eicosatetraenoate + 2 glutathione = (15S)-hydroxy-(5Z,8Z,11Z,13E)-eicosatetraenoate + glutathione disulfide + H2O. In terms of biological role, catalyzes the reduction of hydroperoxides in a glutathione-dependent manner thus regulating cellular redox homeostasis. Can reduce small soluble hydroperoxides such as H2O2, cumene hydroperoxide and tert-butyl hydroperoxide, as well as several fatty acid-derived hydroperoxides. Cannot reduce phosphatidycholine hydroperoxide. The polypeptide is Glutathione peroxidase 2 (GPX2) (Macaca fuscata fuscata (Japanese macaque)).